Consider the following 353-residue polypeptide: Photosystem II protein D1 (353 aa).

An N-acetylthreonine modification is found at Thr2. Position 2 is a phosphothreonine (Thr2). A run of 3 helical transmembrane segments spans residues 29-46 (YIGW…TATS), 118-133 (HFLL…EWEL), and 142-156 (WIAV…AATA). His118 contacts chlorophyll a. Residue Tyr126 participates in pheophytin a binding. Asp170 and Glu189 together coordinate [CaMn4O5] cluster. A helical membrane pass occupies residues 197–218 (FHMLGVAGVFGGSLFSAMHGSL). Residue His198 participates in chlorophyll a binding. Residues His215 and 264–265 (SF) each bind a quinone. Residue His215 participates in Fe cation binding. His272 provides a ligand contact to Fe cation. Residues 274–288 (FLAAWPVVGIWFTAL) form a helical membrane-spanning segment. [CaMn4O5] cluster is bound by residues His332, Glu333, Asp342, and Ala344. The propeptide occupies 345-353 (VVEAPSTNG).

It belongs to the reaction center PufL/M/PsbA/D family. As to quaternary structure, PSII is composed of 1 copy each of membrane proteins PsbA, PsbB, PsbC, PsbD, PsbE, PsbF, PsbH, PsbI, PsbJ, PsbK, PsbL, PsbM, PsbT, PsbX, PsbY, PsbZ, Psb30/Ycf12, at least 3 peripheral proteins of the oxygen-evolving complex and a large number of cofactors. It forms dimeric complexes. The D1/D2 heterodimer binds P680, chlorophylls that are the primary electron donor of PSII, and subsequent electron acceptors. It shares a non-heme iron and each subunit binds pheophytin, quinone, additional chlorophylls, carotenoids and lipids. D1 provides most of the ligands for the Mn4-Ca-O5 cluster of the oxygen-evolving complex (OEC). There is also a Cl(-1) ion associated with D1 and D2, which is required for oxygen evolution. The PSII complex binds additional chlorophylls, carotenoids and specific lipids. is required as a cofactor. In terms of processing, tyr-161 forms a radical intermediate that is referred to as redox-active TyrZ, YZ or Y-Z. Post-translationally, C-terminally processed by CTPA; processing is essential to allow assembly of the oxygen-evolving complex and thus photosynthetic growth.

Its subcellular location is the plastid. It localises to the chloroplast thylakoid membrane. The enzyme catalyses 2 a plastoquinone + 4 hnu + 2 H2O = 2 a plastoquinol + O2. Photosystem II (PSII) is a light-driven water:plastoquinone oxidoreductase that uses light energy to abstract electrons from H(2)O, generating O(2) and a proton gradient subsequently used for ATP formation. It consists of a core antenna complex that captures photons, and an electron transfer chain that converts photonic excitation into a charge separation. The D1/D2 (PsbA/PsbD) reaction center heterodimer binds P680, the primary electron donor of PSII as well as several subsequent electron acceptors. The sequence is that of Photosystem II protein D1 from Aethionema grandiflorum (Persian stone-cress).